Reading from the N-terminus, the 332-residue chain is Malate dehydrogenase (332 aa).

NAD(+) contacts are provided by residues 11 to 16 (GAGNVG) and aspartate 35. Substrate-binding residues include arginine 97 and arginine 103. Residues asparagine 110 and 133–135 (VTN) contribute to the NAD(+) site. The substrate site is built by asparagine 135 and arginine 166. Histidine 190 acts as the Proton acceptor in catalysis.

The protein belongs to the LDH/MDH superfamily. MDH type 3 family.

It carries out the reaction (S)-malate + NAD(+) = oxaloacetate + NADH + H(+). In terms of biological role, catalyzes the reversible oxidation of malate to oxaloacetate. This is Malate dehydrogenase from Hydrogenobaculum sp. (strain Y04AAS1).